Consider the following 423-residue polypeptide: Hypoxia responsive morphology factor B (423 aa).

Residues 46–69 (KRSKTRRPKKEYKLQYENTKAHRV) carry the Bipartite nuclear localization signal motif. The interval 157 to 187 (TQNCWAYRAAYLNAVHTIFSEQICSAMEVSP) is RNA recognition motif (RRM)-like domain. Residues 243–257 (LSPQSGRGPEPSTQI) are compositionally biased toward polar residues. The segment at 243 to 273 (LSPQSGRGPEPSTQIAEPGRHDSQSEQSTIS) is disordered.

The protein belongs to the hrmA family.

It localises to the nucleus. In terms of biological role, probably modulates the generation of the hypoxia-typic morphotype (called H-MORPH) with altered biofilm architecture that leads to increased host inflammation, rapid disease progression, and mortality in a murine model of invasive aspergillosis. The protein is Hypoxia responsive morphology factor B of Aspergillus fumigatus (strain CBS 144.89 / FGSC A1163 / CEA10) (Neosartorya fumigata).